The chain runs to 283 residues: Elongation factor Ts (283 aa).

Residues 80–83 (TDFV) form an involved in Mg(2+) ion dislocation from EF-Tu region.

It belongs to the EF-Ts family.

The protein localises to the cytoplasm. Its function is as follows. Associates with the EF-Tu.GDP complex and induces the exchange of GDP to GTP. It remains bound to the aminoacyl-tRNA.EF-Tu.GTP complex up to the GTP hydrolysis stage on the ribosome. The polypeptide is Elongation factor Ts (Haemophilus influenzae (strain PittEE)).